We begin with the raw amino-acid sequence, 2311 residues long: C2 domain-containing protein 3 (2311 aa).

Disordered stretches follow at residues 447–511 (SDSS…TSRC) and 543–562 (GTAV…RPVR). The segment covering 470–509 (IALDRGRHRDNSPSEYKEDAKQTKGNDSLRDSKTSEKSTS) has biased composition (basic and acidic residues). 6 C2 domains span residues 508–666 (TSRC…SVTC), 751–888 (GNGG…TRLL), 952–1112 (LDPP…HRED), 1136–1303 (PSGL…SGWY), 1370–1505 (HKRE…TLAV), and 1581–1713 (KTEV…CGWY). The interval 939 to 964 (GTSQTAMPRPAHFLDPPLSSSQMGRP) is disordered. Disordered stretches follow at residues 1536-1589 (PSNS…LLDA), 1955-1977 (SEAY…GSLN), 2036-2065 (MTDR…PVNP), 2084-2233 (NDPS…SNLL), and 2261-2292 (VREG…PKEE). Basic and acidic residues-rich tracts occupy residues 1565-1589 (FEEK…LLDA) and 1955-1964 (SEAYEREGQR). The segment covering 2036–2047 (MTDRTSPWSSIL) has biased composition (polar residues). Basic and acidic residues predominate over residues 2048 to 2059 (SERDSDSMDHPQ). Residues 2084–2095 (NDPSSVLSSARS) are compositionally biased toward polar residues. Acidic residues predominate over residues 2138 to 2151 (AESEAESQEMDGDP). The segment covering 2221–2233 (GSESPQVPPSNLL) has biased composition (polar residues).

The protein localises to the cytoplasm. Its subcellular location is the cytoskeleton. The protein resides in the cilium basal body. It is found in the microtubule organizing center. It localises to the centrosome. The protein localises to the centriole. Component of the centrioles that acts as a positive regulator of centriole elongation. Promotes assembly of centriolar distal appendage, a structure at the distal end of the mother centriole that acts as an anchor of the cilium. Required for primary cilium formation. The polypeptide is C2 domain-containing protein 3 (c2cd3) (Xenopus tropicalis (Western clawed frog)).